Consider the following 262-residue polypeptide: Type III pantothenate kinase (262 aa).

9–16 (DIGNTNVK) is a binding site for ATP. Residues Tyr103 and 110 to 113 (GADR) each bind substrate. Residue Asp112 is the Proton acceptor of the active site. Asp134 provides a ligand contact to K(+). Thr137 is a binding site for ATP. Thr190 contacts substrate.

Belongs to the type III pantothenate kinase family. Homodimer. It depends on NH4(+) as a cofactor. K(+) serves as cofactor.

The protein localises to the cytoplasm. It carries out the reaction (R)-pantothenate + ATP = (R)-4'-phosphopantothenate + ADP + H(+). It participates in cofactor biosynthesis; coenzyme A biosynthesis; CoA from (R)-pantothenate: step 1/5. Catalyzes the phosphorylation of pantothenate (Pan), the first step in CoA biosynthesis. This Nitratidesulfovibrio vulgaris (strain ATCC 29579 / DSM 644 / CCUG 34227 / NCIMB 8303 / VKM B-1760 / Hildenborough) (Desulfovibrio vulgaris) protein is Type III pantothenate kinase.